A 249-amino-acid polypeptide reads, in one-letter code: NAD(P)H-quinone oxidoreductase subunit K 2 (249 aa).

Residues cysteine 54, cysteine 55, cysteine 119, and cysteine 150 each coordinate [4Fe-4S] cluster.

Belongs to the complex I 20 kDa subunit family. NDH-1 can be composed of about 15 different subunits; different subcomplexes with different compositions have been identified which probably have different functions. The cofactor is [4Fe-4S] cluster.

It localises to the cell inner membrane. The catalysed reaction is a plastoquinone + NADH + (n+1) H(+)(in) = a plastoquinol + NAD(+) + n H(+)(out). The enzyme catalyses a plastoquinone + NADPH + (n+1) H(+)(in) = a plastoquinol + NADP(+) + n H(+)(out). NDH-1 shuttles electrons from an unknown electron donor, via FMN and iron-sulfur (Fe-S) centers, to quinones in the respiratory and/or the photosynthetic chain. The immediate electron acceptor for the enzyme in this species is believed to be plastoquinone. Couples the redox reaction to proton translocation, and thus conserves the redox energy in a proton gradient. Cyanobacterial NDH-1 also plays a role in inorganic carbon-concentration. This is NAD(P)H-quinone oxidoreductase subunit K 2 from Gloeobacter violaceus (strain ATCC 29082 / PCC 7421).